The sequence spans 294 residues: UPF0761 membrane protein MADE_1017605/MADE_1018330 (294 aa).

Helical transmembrane passes span 45-65, 99-119, 141-161, 182-202, 213-233, and 247-267; these read LLSL…FPAF, ASQM…MLIS, FAIY…SVVV, FLLS…LYMV, AFVG…GFAL, and ALAV…IVLF.

The protein belongs to the UPF0761 family.

The protein localises to the cell inner membrane. This Alteromonas mediterranea (strain DSM 17117 / CIP 110805 / LMG 28347 / Deep ecotype) protein is UPF0761 membrane protein MADE_1017605/MADE_1018330.